The primary structure comprises 420 residues: Glucose-1-phosphate adenylyltransferase (420 aa).

Alpha-D-glucose 1-phosphate is bound by residues tyrosine 108, glycine 173, 188–189 (EK), and serine 206.

Belongs to the bacterial/plant glucose-1-phosphate adenylyltransferase family. In terms of assembly, homotetramer.

The enzyme catalyses alpha-D-glucose 1-phosphate + ATP + H(+) = ADP-alpha-D-glucose + diphosphate. It functions in the pathway glycan biosynthesis; glycogen biosynthesis. In terms of biological role, involved in the biosynthesis of ADP-glucose, a building block required for the elongation reactions to produce glycogen. Catalyzes the reaction between ATP and alpha-D-glucose 1-phosphate (G1P) to produce pyrophosphate and ADP-Glc. This Paraburkholderia phytofirmans (strain DSM 17436 / LMG 22146 / PsJN) (Burkholderia phytofirmans) protein is Glucose-1-phosphate adenylyltransferase.